The following is a 166-amino-acid chain: MTIVYLSLGTNMRDRAAYLQKALETLADLPQTRLLAQSSIYETAAWGKTDQADFLNMACQLDTQLTAADFLKETQAIEQSLGRVRHEKWGSRTIDIDILLFGEEVYDTKELKVPHPYMTERAFVLIPLLELQPDLKLPPNHKFLRDYLAALDQSDITLFSAQQTEF.

Belongs to the HPPK family.

It carries out the reaction 6-hydroxymethyl-7,8-dihydropterin + ATP = (7,8-dihydropterin-6-yl)methyl diphosphate + AMP + H(+). The protein operates within cofactor biosynthesis; tetrahydrofolate biosynthesis; 2-amino-4-hydroxy-6-hydroxymethyl-7,8-dihydropteridine diphosphate from 7,8-dihydroneopterin triphosphate: step 4/4. In terms of biological role, catalyzes the transfer of pyrophosphate from adenosine triphosphate (ATP) to 6-hydroxymethyl-7,8-dihydropterin, an enzymatic step in folate biosynthesis pathway. This Streptococcus pyogenes serotype M18 (strain MGAS8232) protein is 2-amino-4-hydroxy-6-hydroxymethyldihydropteridine pyrophosphokinase (folK).